The chain runs to 377 residues: Probable sensor histidine kinase HK (377 aa).

Disordered stretches follow at residues 1-169 and 346-377; these read MAHP…RPAD and LPTP…TSDQ. The segment covering 10–54 has biased composition (basic residues); that stretch reads RLQRRHGARSGSSRCRHRRPVPRRRSRSRPRWRAARAHRRHHRRS. Residues 84 to 98 are compositionally biased toward basic and acidic residues; sequence RRPDPRGGANTDHHA. Basic residues-rich tracts occupy residues 99–115 and 137–146; these read APRH…RRRD and TTVRRRRQPR. In terms of domain architecture, Histidine kinase spans 146–350; it reads RITHPVGTAD…ELRITLPTPR (205 aa). A Phosphohistidine; by autocatalysis modification is found at H149. Residues 352 to 377 show a composition bias toward basic and acidic residues; that stretch reads PFHEELPRITSSDTKDPNREHDTSDQ.

In terms of processing, autophosphorylated.

The enzyme catalyses ATP + protein L-histidine = ADP + protein N-phospho-L-histidine.. Member of the two-component system HK/TcrA. Phosphorylates TcrA. The protein is Probable sensor histidine kinase HK of Mycobacterium tuberculosis (strain CDC 1551 / Oshkosh).